A 189-amino-acid chain; its full sequence is Holliday junction branch migration complex subunit RuvA (189 aa).

Positions 1 to 62 (MIVALKGNIE…EEAWSLYGFA (62 aa)) are domain I. The interval 63 to 138 (EEAEKRVFDT…FSLSLQEGSK (76 aa)) is domain II. The flexible linker stretch occupies residues 138–139 (KA). A domain III region spans residues 140 to 189 (STPPVFEESRLALESLGFKSELIAKALQNIQATTTQEIIKEALKKLQTLR).

This sequence belongs to the RuvA family. As to quaternary structure, homotetramer. Forms an RuvA(8)-RuvB(12)-Holliday junction (HJ) complex. HJ DNA is sandwiched between 2 RuvA tetramers; dsDNA enters through RuvA and exits via RuvB. An RuvB hexamer assembles on each DNA strand where it exits the tetramer. Each RuvB hexamer is contacted by two RuvA subunits (via domain III) on 2 adjacent RuvB subunits; this complex drives branch migration. In the full resolvosome a probable DNA-RuvA(4)-RuvB(12)-RuvC(2) complex forms which resolves the HJ.

It is found in the cytoplasm. Functionally, the RuvA-RuvB-RuvC complex processes Holliday junction (HJ) DNA during genetic recombination and DNA repair, while the RuvA-RuvB complex plays an important role in the rescue of blocked DNA replication forks via replication fork reversal (RFR). RuvA specifically binds to HJ cruciform DNA, conferring on it an open structure. The RuvB hexamer acts as an ATP-dependent pump, pulling dsDNA into and through the RuvAB complex. HJ branch migration allows RuvC to scan DNA until it finds its consensus sequence, where it cleaves and resolves the cruciform DNA. This is Holliday junction branch migration complex subunit RuvA from Wolinella succinogenes (strain ATCC 29543 / DSM 1740 / CCUG 13145 / JCM 31913 / LMG 7466 / NCTC 11488 / FDC 602W) (Vibrio succinogenes).